The sequence spans 159 residues: Ribosomal RNA large subunit methyltransferase H (159 aa).

Residues leucine 76, glycine 108, and phenylalanine 127 to phenylalanine 132 contribute to the S-adenosyl-L-methionine site.

It belongs to the RNA methyltransferase RlmH family. As to quaternary structure, homodimer.

The protein localises to the cytoplasm. The enzyme catalyses pseudouridine(1915) in 23S rRNA + S-adenosyl-L-methionine = N(3)-methylpseudouridine(1915) in 23S rRNA + S-adenosyl-L-homocysteine + H(+). Specifically methylates the pseudouridine at position 1915 (m3Psi1915) in 23S rRNA. This Exiguobacterium sp. (strain ATCC BAA-1283 / AT1b) protein is Ribosomal RNA large subunit methyltransferase H.